Consider the following 411-residue polypeptide: Tyrosine--tRNA ligase (411 aa).

Position 34 (Tyr-34) interacts with L-tyrosine. The 'HIGH' region motif lies at 39 to 48 (CTATSLHIGS). 2 residues coordinate L-tyrosine: Tyr-171 and Gln-175. Residues 231–235 (KMGKT) carry the 'KMSKS' region motif. ATP is bound at residue Lys-234. One can recognise an S4 RNA-binding domain in the interval 345-411 (ITAFELFHEA…GKKRHILVKI (67 aa)).

It belongs to the class-I aminoacyl-tRNA synthetase family. TyrS type 1 subfamily. In terms of assembly, homodimer.

The protein resides in the cytoplasm. The enzyme catalyses tRNA(Tyr) + L-tyrosine + ATP = L-tyrosyl-tRNA(Tyr) + AMP + diphosphate + H(+). Its function is as follows. Catalyzes the attachment of tyrosine to tRNA(Tyr) in a two-step reaction: tyrosine is first activated by ATP to form Tyr-AMP and then transferred to the acceptor end of tRNA(Tyr). The protein is Tyrosine--tRNA ligase of Rickettsia bellii (strain RML369-C).